Consider the following 829-residue polypeptide: Periplasmic nitrate reductase (829 aa).

The segment at residues 1-29 (MKMTRRAFVKANAAASAAAVAGVTLPASA) is a signal peptide (tat-type signal). In terms of domain architecture, 4Fe-4S Mo/W bis-MGD-type spans 41 to 97 (IKWDKAPCRFCGTGCSVLVGTQNGRVVATQGDPEAPVNKGLNCIKGYFLSKIMYGKD). Cysteine 48, cysteine 51, cysteine 55, and cysteine 83 together coordinate [4Fe-4S] cluster. Mo-bis(molybdopterin guanine dinucleotide) contacts are provided by residues lysine 85, glutamine 152, asparagine 177, cysteine 181, 214 to 221 (WGSNMAEM), 245 to 249 (STYYH), 264 to 266 (QSD), methionine 374, glutamine 378, asparagine 484, 510 to 511 (SD), lysine 533, aspartate 560, and 718 to 727 (TGRVLEHWHT). Phenylalanine 794 provides a ligand contact to substrate. Residues asparagine 802 and lysine 819 each coordinate Mo-bis(molybdopterin guanine dinucleotide).

Belongs to the prokaryotic molybdopterin-containing oxidoreductase family. NasA/NapA/NarB subfamily. In terms of assembly, component of the periplasmic nitrate reductase NapAB complex composed of NapA and NapB. It depends on [4Fe-4S] cluster as a cofactor. Requires Mo-bis(molybdopterin guanine dinucleotide) as cofactor. Predicted to be exported by the Tat system. The position of the signal peptide cleavage has not been experimentally proven.

It localises to the periplasm. It catalyses the reaction 2 Fe(II)-[cytochrome] + nitrate + 2 H(+) = 2 Fe(III)-[cytochrome] + nitrite + H2O. Functionally, catalytic subunit of the periplasmic nitrate reductase complex NapAB. Receives electrons from NapB and catalyzes the reduction of nitrate to nitrite. This chain is Periplasmic nitrate reductase, found in Aliivibrio fischeri (strain ATCC 700601 / ES114) (Vibrio fischeri).